The sequence spans 248 residues: MSPNPANPTDLERVATAKILNPASRSQVTQDLSENVILTTVDDLYNWAKLSSLWPLLYGTACCFIEFAALIGSRFDFDRFGLVPRSSPRQADLIITAGTITMKMAPALVRLYEEMPEPKYVIAMGACTITGGMFSSDSTTAVRGVDKLIPVDVYIPGCPPRPEAIFDAIIKLRKKVANESIQERAITQQTHRYYSTSHQMKVVAPILDGKYLQQGTRSAPPRELQEAMGMPVPPALTTSQQKEQLNRG.

A propeptide spanning residues 1–2 (MS) is cleaved from the precursor. Residues Cys-62, Cys-63, Cys-127, and Cys-158 each contribute to the [4Fe-4S] cluster site. The tract at residues 228–248 (MGMPVPPALTTSQQKEQLNRG) is disordered. Positions 236 to 248 (LTTSQQKEQLNRG) are enriched in polar residues.

The protein belongs to the complex I 20 kDa subunit family. In terms of assembly, NDH-1 can be composed of about 15 different subunits; different subcomplexes with different compositions have been identified which probably have different functions. [4Fe-4S] cluster is required as a cofactor.

It is found in the cellular thylakoid membrane. It carries out the reaction a plastoquinone + NADH + (n+1) H(+)(in) = a plastoquinol + NAD(+) + n H(+)(out). The catalysed reaction is a plastoquinone + NADPH + (n+1) H(+)(in) = a plastoquinol + NADP(+) + n H(+)(out). NDH-1 shuttles electrons from an unknown electron donor, via FMN and iron-sulfur (Fe-S) centers, to quinones in the respiratory and/or the photosynthetic chain. The immediate electron acceptor for the enzyme in this species is believed to be plastoquinone. Couples the redox reaction to proton translocation, and thus conserves the redox energy in a proton gradient. Cyanobacterial NDH-1 also plays a role in inorganic carbon-concentration. This Synechocystis sp. (strain ATCC 27184 / PCC 6803 / Kazusa) protein is NAD(P)H-quinone oxidoreductase subunit K 1.